The following is a 252-amino-acid chain: MVSNTIRVAVGILGNAASMLLYAAPILTFRRVIKKGSVEEFSCVPYILALFNCLLYTWYGLPVVSSGWENSTVSSINGLGILLEIAFISIYTWFAPRERKKFVLRMVLPVLAFFALTAIFSSFLFHTHGLRKVFVGSIGLVASISMYSSPMVAAKQVITTKSVEFMPFYLSLFSFLSSALWMIYGLLGKDLFIASPNFIGCPMGILQLVLYCIYRKSHKEAEKLHDIDQENGLKVVTTHEKITGREPEAQRD.

The Extracellular segment spans residues 1-8; the sequence is MVSNTIRV. The chain crosses the membrane as a helical span at residues 9–29; it reads AVGILGNAASMLLYAAPILTF. A MtN3/slv 1 domain is found at 10–98; it reads VGILGNAASM…SIYTWFAPRE (89 aa). The Cytoplasmic portion of the chain corresponds to 30-43; the sequence is RRVIKKGSVEEFSC. A helical transmembrane segment spans residues 44–64; that stretch reads VPYILALFNCLLYTWYGLPVV. The Extracellular segment spans residues 65-75; the sequence is SSGWENSTVSS. The N-linked (GlcNAc...) asparagine glycan is linked to Asn-70. The chain crosses the membrane as a helical span at residues 76 to 96; the sequence is INGLGILLEIAFISIYTWFAP. The Cytoplasmic segment spans residues 97-105; sequence RERKKFVLR. A helical transmembrane segment spans residues 106-126; the sequence is MVLPVLAFFALTAIFSSFLFH. At 127 to 132 the chain is on the extracellular side; it reads THGLRK. A helical membrane pass occupies residues 133–153; that stretch reads VFVGSIGLVASISMYSSPMVA. Residues 134–219 form the MtN3/slv 2 domain; sequence FVGSIGLVAS…LYCIYRKSHK (86 aa). The Cytoplasmic segment spans residues 154-167; it reads AKQVITTKSVEFMP. Residues 168-188 traverse the membrane as a helical segment; sequence FYLSLFSFLSSALWMIYGLLG. Over 189-190 the chain is Extracellular; sequence KD. The helical transmembrane segment at 191–211 threads the bilayer; that stretch reads LFIASPNFIGCPMGILQLVLY. Residues 212 to 252 lie on the Cytoplasmic side of the membrane; sequence CIYRKSHKEAEKLHDIDQENGLKVVTTHEKITGREPEAQRD.

It belongs to the SWEET sugar transporter family. In terms of assembly, forms homooligomers and/or heterooligomers.

It is found in the cell membrane. Mediates both low-affinity uptake and efflux of sugar across the plasma membrane. This chain is Bidirectional sugar transporter SWEET3b (SWEET3B), found in Oryza sativa subsp. japonica (Rice).